A 304-amino-acid chain; its full sequence is Probable porphobilinogen deaminase (304 aa).

S-(dipyrrolylmethanemethyl)cysteine is present on cysteine 240.

The protein belongs to the HMBS family. It depends on dipyrromethane as a cofactor.

It catalyses the reaction 4 porphobilinogen + H2O = hydroxymethylbilane + 4 NH4(+). It functions in the pathway porphyrin-containing compound metabolism; protoporphyrin-IX biosynthesis; coproporphyrinogen-III from 5-aminolevulinate: step 2/4. In terms of biological role, tetrapolymerization of the monopyrrole PBG into the hydroxymethylbilane pre-uroporphyrinogen in several discrete steps. In Ignicoccus hospitalis (strain KIN4/I / DSM 18386 / JCM 14125), this protein is Probable porphobilinogen deaminase.